The chain runs to 614 residues: Probable LRR receptor-like serine/threonine-protein kinase At5g45780 (614 aa).

The first 26 residues, 1 to 26, serve as a signal peptide directing secretion; it reads MEISLMKFLFLGIWVYYYSVLDSVSA. The Extracellular segment spans residues 27–242; sequence MDSLLSPKGV…NSKHHSLVLS (216 aa). LRR repeat units follow at residues 104-126, 128-151, 152-174, and 176-197; these read HLHT…LGQL, ELET…GFLT, HLNY…VAGL, and GLSF…ISAK. Asparagine 186, asparagine 193, and asparagine 224 each carry an N-linked (GlcNAc...) asparagine glycan. Residues 243 to 263 traverse the membrane as a helical segment; it reads FAFGIVVAFIISLMFLFFWVL. Topologically, residues 264 to 614 are cytoplasmic; sequence WHRSRLSRSH…IEAIELSGPR (351 aa). The residue at position 297 (threonine 297) is a Phosphothreonine. The Protein kinase domain maps to 300-576; the sequence is FSPKNILGQG…QVLKVLEGLV (277 aa). 306–314 contacts ATP; the sequence is LGQGGFGMV. A Phosphothreonine modification is found at threonine 323. ATP is bound at residue lysine 328. Position 380 is a phosphoserine (serine 380). Aspartate 426 acts as the Proton acceptor in catalysis. A phosphothreonine mark is found at threonine 459, threonine 460, and threonine 465. The residue at position 473 (tyrosine 473) is a Phosphotyrosine. Position 475 is a phosphoserine (serine 475). At threonine 476 the chain carries Phosphothreonine. Serine 480 is modified (phosphoserine). At threonine 555 the chain carries Phosphothreonine.

This sequence belongs to the protein kinase superfamily. Ser/Thr protein kinase family.

Its subcellular location is the membrane. The enzyme catalyses L-seryl-[protein] + ATP = O-phospho-L-seryl-[protein] + ADP + H(+). It carries out the reaction L-threonyl-[protein] + ATP = O-phospho-L-threonyl-[protein] + ADP + H(+). In Arabidopsis thaliana (Mouse-ear cress), this protein is Probable LRR receptor-like serine/threonine-protein kinase At5g45780.